We begin with the raw amino-acid sequence, 433 residues long: Serine--tRNA ligase (433 aa).

Position 235 to 237 (Thr-235 to Glu-237) interacts with L-serine. ATP is bound at residue Arg-266–Glu-268. Glu-289 provides a ligand contact to L-serine. An ATP-binding site is contributed by Glu-353–Ser-356. Ser-388 lines the L-serine pocket.

Belongs to the class-II aminoacyl-tRNA synthetase family. Type-1 seryl-tRNA synthetase subfamily. As to quaternary structure, homodimer. The tRNA molecule binds across the dimer.

Its subcellular location is the cytoplasm. The catalysed reaction is tRNA(Ser) + L-serine + ATP = L-seryl-tRNA(Ser) + AMP + diphosphate + H(+). It catalyses the reaction tRNA(Sec) + L-serine + ATP = L-seryl-tRNA(Sec) + AMP + diphosphate + H(+). The protein operates within aminoacyl-tRNA biosynthesis; selenocysteinyl-tRNA(Sec) biosynthesis; L-seryl-tRNA(Sec) from L-serine and tRNA(Sec): step 1/1. Catalyzes the attachment of serine to tRNA(Ser). Is also able to aminoacylate tRNA(Sec) with serine, to form the misacylated tRNA L-seryl-tRNA(Sec), which will be further converted into selenocysteinyl-tRNA(Sec). The protein is Serine--tRNA ligase of Burkholderia cenocepacia (strain HI2424).